Here is a 950-residue protein sequence, read N- to C-terminus: Protocadherin alpha-3 (950 aa).

Positions 1 to 29 (MLFSWREDPGAQCLLLSLLLLAASEVGSG) are cleaved as a signal peptide. Cadherin domains lie at 30 to 133 (QLHY…APVF), 134 to 242 (PMSV…APAF), 243 to 350 (ERTI…VPEL), 351 to 455 (VIHS…APAF), 456 to 565 (SQSE…APAL), and 581 to 678 (VPRS…APKA). The Extracellular portion of the chain corresponds to 30 to 697 (QLHYSVSEEA…GPEAALVDVN (668 aa)). Residues N257 and N265 are each glycosylated (N-linked (GlcNAc...) asparagine). N548 carries N-linked (GlcNAc...) asparagine glycosylation. Residues 698-718 (VYLIVAICAVSSLLVLTLLLY) traverse the membrane as a helical segment. Topologically, residues 719–950 (TALRCSAPPT…GNSTTDNSDQ (232 aa)) are cytoplasmic. PXXP repeat units lie at residues 734-737 (PGKP) and 774-777 (PSLP). The interval 734–894 (PGKPTLVCSS…PDKFIIPGSP (161 aa)) is 6 X 4 AA repeats of P-X-X-P. Disordered regions lie at residues 777-806 (PPCPISRDREEKQDVDVDLSAKPRQPNPDW), 831-856 (GPGGPDQQWPTVSSATPEPEAGEVSP), and 869-889 (FKYGPGNPKQSGPGELPDKFI). Positions 782-797 (SRDREEKQDVDVDLSA) are enriched in basic and acidic residues. PXXP repeat units follow at residues 799–802 (PRQP), 832–835 (PGGP), 873–876 (PGNP), and 891–894 (PGSP). The tract at residues 901-950 (QEPANSQIDKSDFITFGKKEETKKKKKKKKGNKTQEKKEKGNSTTDNSDQ) is disordered. Over residues 909–923 (DKSDFITFGKKEETK) the composition is skewed to basic and acidic residues.

It localises to the cell membrane. Functionally, potential calcium-dependent cell-adhesion protein. May be involved in the establishment and maintenance of specific neuronal connections in the brain. The polypeptide is Protocadherin alpha-3 (PCDHA3) (Pan troglodytes (Chimpanzee)).